The chain runs to 296 residues: MELSRSSQREMMDVAVDAEDNAFDTGDHRLFARMPSSVSFNKLRKRLLRQVRQAFDGFGMLKGSKRWLVGVSGGKDSYSLLALLMDLKWRGLLPVELIACNLDQGQPNFPKHILPDYLASIGVRHRIEYRDTYSIVKEKVPTGATYCSLCSRLRRGNLYRIAREEGCDALVLGHHREDILETFFMNFFHGGRLASMPAKLLNDEGDLTVLRPLTYAAEDDLAKFAAAMEFPIIPCDLCGSQDGLERNAMKAMLADIERRMPGRKDTMLRALGHVNPSHLLDPKLFDFQSLSPEPKE.

The short motif at 72–77 (SGGKDS) is the PP-loop motif element. The [4Fe-4S] cluster site is built by Cys147, Cys150, and Cys238.

Belongs to the TtcA family. In terms of assembly, homodimer. The cofactor is Mg(2+). [4Fe-4S] cluster is required as a cofactor.

It localises to the cytoplasm. It carries out the reaction cytidine(32) in tRNA + S-sulfanyl-L-cysteinyl-[cysteine desulfurase] + AH2 + ATP = 2-thiocytidine(32) in tRNA + L-cysteinyl-[cysteine desulfurase] + A + AMP + diphosphate + H(+). The protein operates within tRNA modification. Its function is as follows. Catalyzes the ATP-dependent 2-thiolation of cytidine in position 32 of tRNA, to form 2-thiocytidine (s(2)C32). The sulfur atoms are provided by the cysteine/cysteine desulfurase (IscS) system. This chain is tRNA-cytidine(32) 2-sulfurtransferase, found in Sinorhizobium fredii (strain NBRC 101917 / NGR234).